Reading from the N-terminus, the 759-residue chain is Serine/threonine-protein kinase HRK1 (759 aa).

Residues 1–32 are disordered; that stretch reads MPNLLSRNPFHGHHNDHHHDRENSSNNPPQLI. Ser37 carries the post-translational modification Phosphoserine. The tract at residues 45–162 is disordered; the sequence is KQSNDSLRSE…PPPSKSTSTV (118 aa). The segment covering 59 to 97 has biased composition (low complexity); the sequence is SMKSTTTTTNYTTTNLNNNTHSHSNATSISTNNYNNNYE. The span at 113-122 shows a compositional bias: polar residues; that stretch reads SPASPKQTHS. One can recognise a Protein kinase domain in the interval 215-722; that stretch reads GKLGKLLGSG…LDDIFNDEWF (508 aa). ATP contacts are provided by residues 221 to 229 and Lys244; that span reads LGSGAGGSV. Asp340 functions as the Proton acceptor in the catalytic mechanism. Phosphoserine occurs at positions 382 and 472. The span at 493-502 shows a compositional bias: polar residues; that stretch reads PNTPASIQGK. Disordered regions lie at residues 493 to 578 and 614 to 682; these read PNTP…GRVD and AANA…KIIH. Phosphothreonine is present on Thr495. Ser498 carries the post-translational modification Phosphoserine. The span at 510 to 519 shows a compositional bias: acidic residues; sequence VEEETEENKE. Positions 520–547 are enriched in basic and acidic residues; it reads DDSNNDKESTPDNDKESTIDIKISKNEN. The segment covering 614–646 has biased composition (low complexity); sequence AANANPDMVPQNNPQQQQQQQQQQQQQQQQQQQ. Positions 663-672 are enriched in polar residues; it reads ASDNKSSQQH.

Belongs to the protein kinase superfamily. Ser/Thr protein kinase family.

The protein localises to the cytoplasm. The catalysed reaction is L-seryl-[protein] + ATP = O-phospho-L-seryl-[protein] + ADP + H(+). It catalyses the reaction L-threonyl-[protein] + ATP = O-phospho-L-threonyl-[protein] + ADP + H(+). Involved in regulating the activity of the plasma membrane proton pump PMA1. The sequence is that of Serine/threonine-protein kinase HRK1 (HRK1) from Saccharomyces cerevisiae (strain ATCC 204508 / S288c) (Baker's yeast).